Consider the following 305-residue polypeptide: MSKIPVIVIVGPTAVGKTSLSITLAKNFDGEIISGDSMQVYRGLDIGTAKITPEEMDGIKHYLIDVTDPAVPFTAAKFQAETRGLIESIHNRGKLPIIVGGTGLYIQSVFYDYGFGNASEDKAYRRELDQLDKTTLWQMLDQLDPKSAELIHENNKRRVIRALEVIHLTGKPFSEYQVHHTLNEAYQPLFLGLDLDRELLYERINRRVELMFEEGLVSEASKLYDEHLVDVPAIRGIGYKELFTYFDGNSSLEEAKELIQKNSRHFAKRQLTWFRNRMDIDWIQAGVSTTDTEAMEKVKTFLASK.

11–18 serves as a coordination point for ATP; it reads GPTAVGKT. Residue 13-18 coordinates substrate; it reads TAVGKT. Residues 36–39 form an interaction with substrate tRNA region; the sequence is DSMQ.

The protein belongs to the IPP transferase family. As to quaternary structure, monomer. The cofactor is Mg(2+).

It catalyses the reaction adenosine(37) in tRNA + dimethylallyl diphosphate = N(6)-dimethylallyladenosine(37) in tRNA + diphosphate. Its function is as follows. Catalyzes the transfer of a dimethylallyl group onto the adenine at position 37 in tRNAs that read codons beginning with uridine, leading to the formation of N6-(dimethylallyl)adenosine (i(6)A). The chain is tRNA dimethylallyltransferase from Listeria innocua serovar 6a (strain ATCC BAA-680 / CLIP 11262).